We begin with the raw amino-acid sequence, 195 residues long: ADP-ribosylation factor L (195 aa).

Gly-2 carries N-myristoyl glycine lipidation. GTP is bound by residues 25–32 (GLENSGKT), 72–76 (DLLYP), and 131–134 (NKQD).

It belongs to the small GTPase superfamily. Arf family.

Its function is as follows. May be involved in trafficking events within the endosomal system. The sequence is that of ADP-ribosylation factor L (arrL) from Dictyostelium discoideum (Social amoeba).